A 242-amino-acid polypeptide reads, in one-letter code: Small ribosomal subunit protein uS3 (242 aa).

The KH type-2 domain maps to Ile39–Glu110. The segment at Gly221–Gly242 is disordered. Basic and acidic residues predominate over residues Gln233–Gly242.

The protein belongs to the universal ribosomal protein uS3 family. Part of the 30S ribosomal subunit. Forms a tight complex with proteins S10 and S14.

Its function is as follows. Binds the lower part of the 30S subunit head. Binds mRNA in the 70S ribosome, positioning it for translation. The polypeptide is Small ribosomal subunit protein uS3 (Parasynechococcus marenigrum (strain WH8102)).